A 524-amino-acid polypeptide reads, in one-letter code: GMP synthase [glutamine-hydrolyzing] (524 aa).

Residues 9–207 (RILILDFGSQ…VIHICQCIPN (199 aa)) enclose the Glutamine amidotransferase type-1 domain. Cysteine 86 (nucleophile) is an active-site residue. Catalysis depends on residues histidine 181 and glutamate 183. Positions 208-399 (WTTKHIIEDS…LGLPADLIYR (192 aa)) constitute a GMPS ATP-PPase domain. 235 to 241 (SGGVDSA) contacts ATP.

Homodimer.

The catalysed reaction is XMP + L-glutamine + ATP + H2O = GMP + L-glutamate + AMP + diphosphate + 2 H(+). Its pathway is purine metabolism; GMP biosynthesis; GMP from XMP (L-Gln route): step 1/1. In terms of biological role, catalyzes the synthesis of GMP from XMP. This chain is GMP synthase [glutamine-hydrolyzing], found in Coxiella burnetii (strain RSA 493 / Nine Mile phase I).